Here is a 316-residue protein sequence, read N- to C-terminus: L-lactate dehydrogenase (316 aa).

NAD(+) is bound by residues V15, D37, K42, Y68, and 82–83 (GL). Substrate is bound by residues Q85, R91, and 123-126 (NPVD). Residues 121–123 (ASN) and T146 each bind NAD(+). 151-154 (DTSR) contacts substrate. Beta-D-fructose 1,6-bisphosphate-binding residues include R156 and H171. H178 functions as the Proton acceptor in the catalytic mechanism. Position 222 is a phosphotyrosine (Y222). A substrate-binding site is contributed by T231.

The protein belongs to the LDH/MDH superfamily. LDH family. As to quaternary structure, homotetramer.

The protein resides in the cytoplasm. It catalyses the reaction (S)-lactate + NAD(+) = pyruvate + NADH + H(+). It functions in the pathway fermentation; pyruvate fermentation to lactate; (S)-lactate from pyruvate: step 1/1. Allosterically activated by fructose 1,6-bisphosphate (FBP). Its function is as follows. Catalyzes the conversion of lactate to pyruvate. This Borrelia garinii subsp. bavariensis (strain ATCC BAA-2496 / DSM 23469 / PBi) (Borreliella bavariensis) protein is L-lactate dehydrogenase.